Consider the following 327-residue polypeptide: Leucotoxin LukDv (327 aa).

An N-terminal signal peptide occupies residues 1–26 (MKMKKLVKSSVASSIALLLLSNTVDA).

The protein belongs to the aerolysin family. In terms of assembly, toxicity requires sequential binding and synergistic association of a class S and a class F component which form heterooligomeric complexes. LukEv (class S) associates with LukDv (class F).

It localises to the secreted. Functionally, part of a bi-component leucotoxin that acts by forming pores in the membrane of the target cells. The activity of LukEv-LukDv to rabbit leukocytes is similar to that of the Panton-Valentine leucocidin (PVL). LukEv-LukDv is hemolytic to rabbit red blood cells although the activity is only 8% of gamma-hemolysin. This Staphylococcus aureus (strain NCTC 8325 / PS 47) protein is Leucotoxin LukDv (lukDv).